A 75-amino-acid polypeptide reads, in one-letter code: Sec-independent protein translocase protein TatA (75 aa).

The helical transmembrane segment at 1-21 (MGSFSIWHWLIVLVIVVLVFG) threads the bilayer. Basic and acidic residues-rich tracts occupy residues 43 to 54 (MRDSEKSGEDVQ) and 66 to 75 (ATDKSHTVSH). A disordered region spans residues 43-75 (MRDSEKSGEDVQQKIGGDTLDAQATDKSHTVSH).

The protein belongs to the TatA/E family. In terms of assembly, the Tat system comprises two distinct complexes: a TatABC complex, containing multiple copies of TatA, TatB and TatC subunits, and a separate TatA complex, containing only TatA subunits. Substrates initially bind to the TatABC complex, which probably triggers association of the separate TatA complex to form the active translocon.

The protein localises to the cell inner membrane. Its function is as follows. Part of the twin-arginine translocation (Tat) system that transports large folded proteins containing a characteristic twin-arginine motif in their signal peptide across membranes. TatA could form the protein-conducting channel of the Tat system. The protein is Sec-independent protein translocase protein TatA of Aromatoleum aromaticum (strain DSM 19018 / LMG 30748 / EbN1) (Azoarcus sp. (strain EbN1)).